Consider the following 237-residue polypeptide: Ribonuclease PH (237 aa).

Residues Arg-86 and 124-126 (GTR) contribute to the phosphate site.

The protein belongs to the RNase PH family. In terms of assembly, homohexameric ring arranged as a trimer of dimers.

It catalyses the reaction tRNA(n+1) + phosphate = tRNA(n) + a ribonucleoside 5'-diphosphate. Phosphorolytic 3'-5' exoribonuclease that plays an important role in tRNA 3'-end maturation. Removes nucleotide residues following the 3'-CCA terminus of tRNAs; can also add nucleotides to the ends of RNA molecules by using nucleoside diphosphates as substrates, but this may not be physiologically important. Probably plays a role in initiation of 16S rRNA degradation (leading to ribosome degradation) during starvation. The polypeptide is Ribonuclease PH (Zymomonas mobilis subsp. mobilis (strain ATCC 31821 / ZM4 / CP4)).